A 149-amino-acid polypeptide reads, in one-letter code: Large ribosomal subunit protein bL9 (149 aa).

It belongs to the bacterial ribosomal protein bL9 family.

Functionally, binds to the 23S rRNA. This Magnetococcus marinus (strain ATCC BAA-1437 / JCM 17883 / MC-1) protein is Large ribosomal subunit protein bL9.